The sequence spans 289 residues: Right origin-binding protein (289 aa).

The HTH araC/xylS-type domain maps to 8-106 (RDLLIWLEGH…AQTPALYRRS (99 aa)). 2 consecutive DNA-binding regions (H-T-H motif) follow at residues 25-46 (DNVAAKAGYSKWHLQRMFKDVT) and 73-96 (ILDIALQYRFDSQQTFTRAFKKQF).

Its function is as follows. Transcriptional regulator. Binds to the right arm of the replication origin oriC of the chromosome. Rob binding may influence the formation of the nucleoprotein structure, required for oriC function in the initiation of replication. The protein is Right origin-binding protein (rob) of Escherichia coli O157:H7.